The primary structure comprises 183 residues: Tetrahydromethanopterin S-methyltransferase subunit A 2 (183 aa).

Residues 1–101 are Cytoplasmic-facing; the sequence is MFLMVEKKPV…TMKALHSNGV (101 aa). Residue His87 participates in 5-hydroxybenzimidazolylcob(I)amide binding. The chain crosses the membrane as a helical span at residues 102-118; it reads DLETGRIIGATGAIPYI. Residues 119–183 lie on the Extracellular side of the membrane; it reads ENMPEEAIER…IGKGDSEENT (65 aa).

The protein belongs to the MtrA family. In terms of assembly, the complex is composed of 8 subunits; MtrA, MtrB, MtrC, MtrD, MtrE, MtrF, MtrG and MtrH. It depends on 5-hydroxybenzimidazolylcob(I)amide as a cofactor.

The protein localises to the cell membrane. The catalysed reaction is 5-methyl-5,6,7,8-tetrahydromethanopterin + coenzyme M + 2 Na(+)(in) = 5,6,7,8-tetrahydromethanopterin + methyl-coenzyme M + 2 Na(+)(out). It functions in the pathway one-carbon metabolism; methanogenesis from CO(2); methyl-coenzyme M from 5,10-methylene-5,6,7,8-tetrahydromethanopterin: step 2/2. Functionally, part of a complex that catalyzes the formation of methyl-coenzyme M and tetrahydromethanopterin from coenzyme M and methyl-tetrahydromethanopterin. This is an energy-conserving, sodium-ion translocating step. The chain is Tetrahydromethanopterin S-methyltransferase subunit A 2 from Methanothermobacter thermautotrophicus (strain ATCC 29096 / DSM 1053 / JCM 10044 / NBRC 100330 / Delta H) (Methanobacterium thermoautotrophicum).